We begin with the raw amino-acid sequence, 354 residues long: GRAM domain-containing protein 2A (354 aa).

The segment covering 1-29 (MTALSRSEATEEGGNQQMHRKTASLNSPV) has biased composition (polar residues). The disordered stretch occupies residues 1 to 46 (MTALSRSEATEEGGNQQMHRKTASLNSPVSCKEKPDRVEEPPDYSL). The segment covering 31 to 40 (CKEKPDRVEE) has biased composition (basic and acidic residues). The 68-residue stretch at 72–139 (QQYHKLFKDV…VSVQMIKKHK (68 aa)) folds into the GRAM domain. Residues 312–332 (LLKVFFVLICFLVMSSSYLAF) form a helical membrane-spanning segment.

It localises to the endoplasmic reticulum membrane. It is found in the cell membrane. Participates in the organization of endoplasmic reticulum-plasma membrane contact sites (EPCS) with pleiotropic functions including STIM1 recruitment and calcium homeostasis. Constitutive tether that co-localize with ESYT2/3 tethers at endoplasmic reticulum-plasma membrane contact sites in a phosphatidylinositol lipid-dependent manner. Pre-marks the subset of phosphtidylinositol 4,5-biphosphate (PI(4,5)P2)-enriched EPCS destined for the store operated calcium entry pathway (SOCE). This chain is GRAM domain-containing protein 2A, found in Homo sapiens (Human).